The sequence spans 353 residues: Palmitoyltransferase SWF1 (353 aa).

Position 1 (M1) is a topological domain, lumenal. Residues 2 to 22 (LFTLIVCLTIISSLATFLLLF) form a helical membrane-spanning segment. The Cytoplasmic segment spans residues 23–61 (GDSPSFRNTPIQKLRNSLLSISRDIFQFYHWLDEKLNGQ). A helical membrane pass occupies residues 62-82 (LLKILNWLVPVGYVMVVTVCF). The Lumenal portion of the chain corresponds to 83–100 (QQFLTHTLPMLSSPGLFR). The chain crosses the membrane as a helical span at residues 101 to 121 (LFTIYFSMVLIYASTILAAFS). The Cytoplasmic segment spans residues 122 to 190 (DPGRITTINL…NNCVGYYNYK (69 aa)). The 51-residue stretch at 147–197 (KTCSTCHIAKPARSKHCSVCNQCFLLYDHHCVWINNCVGYYNYKWFMLFLI) folds into the DHHC domain. Catalysis depends on C177, which acts as the S-palmitoyl cysteine intermediate. Residues 191 to 211 (WFMLFLISNINMLGYGGWLCY) traverse the membrane as a helical segment. Residues 212–233 (WALTPVSWRKITSTNNANKVTG) lie on the Lumenal side of the membrane. The helical transmembrane segment at 234 to 254 (IFLILCSIFIVITTLFTFLHL) threads the bilayer. The Cytoplasmic portion of the chain corresponds to 255–353 (RYIYLGVTTN…WNNLIERLKW (99 aa)).

This sequence belongs to the DHHC palmitoyltransferase family. SWF1 subfamily.

It localises to the endoplasmic reticulum membrane. It catalyses the reaction L-cysteinyl-[protein] + hexadecanoyl-CoA = S-hexadecanoyl-L-cysteinyl-[protein] + CoA. Its function is as follows. Palmitoyltransferase that targets several endosomal SNAREs. Palmitoylates the SNAREs at cysteine residues close to the cytoplasmic end of their transmembrane domain. May have a role in the cellular quality control of transmembrane domain-containing proteins. This is Palmitoyltransferase SWF1 (SWF1) from Candida albicans (strain SC5314 / ATCC MYA-2876) (Yeast).